The following is a 1268-amino-acid chain: MSSVAVLTQESFAEHRSGLVPQQIKVATLNSEEESDPPTYKDAFPPLPEKAACLESAQEPAGAWGNKIRPIKASVITQVFHVPLEERKYKDMNQFGEGEQAKICLEIMQRTGAHLELSLAKDQGLSIMVSGKLDAVMKARKDIVARLQTQASATVAIPKEHHRFVIGKNGEKLQDLELKTATKIQIPRPDDPSNQIKITGTKEGIEKARHEVLLISAEQDKRAVERLEVEKAFHPFIAGPYNRLVGEIMQETGTRINIPPPSVNRTEIVFTGEKEQLAQAVARIKKIYEEKKKKTTTIAVEVKKSQHKYVIGPKGNSLQEILERTGVSVEIPPSDSISETVILRGEPEKLGQALTEVYAKANSFTVSSVAAPSWLHRFIIGKKGQNLAKITQQMPKVHIEFTEGEDKITLEGPTEDVNVAQEQIEGMVKDLINRMDYVEINIDHKFHRHLIGKSGANINRIKDQYKVSVRIPPDSEKSNLIRIEGDPQGVQQAKRELLELASRMENERTKDLIIEQRFHRTIIGQKGERIREIRDKFPEVIINFPDPAQKSDIVQLRGPKNEVEKCTKYMQKMVADLVENSYSISVPIFKQFHKNIIGKGGANIKKIREESNTKIDLPAENSNSETIIITGKRANCEAARSRILSIQKDLANIAEVEVSIPAKLHNSLIGTKGRLIRSIMEECGGVHIHFPVEGSGSDTVVIRGPSSDVEKAKKQLLHLAEEKQTKSFTVDIRAKPEYHKFLIGKGGGKIRKVRDSTGARVIFPAAEDKDQDLITIIGKEDAVREAQKELEALIQNLDNVVEDSMLVDPKHHRHFVIRRGQVLREIAEEYGGVMVSFPRSGTQSDKVTLKGAKDCVEAAKKRIQEIIEDLEAQVTLECAIPQKFHRSVMGPKGSRIQQITRDFSVQIKFPDREENAVHSTEPVVQENGDEAGEGREAKDCDPGSPRRCDIIIISGRKEKCEAAKEALEALVPVTIEVEVPFDLHRYVIGQKGSGIRKMMDEFEVNIHVPAPELQSDIIAITGLAANLDRAKAGLLERVKELQAEQEDRALRSFKLSVTVDPKYHPKIIGRKGAVITQIRLEHDVNIQFPDKDDGNQPQDQITITGYEKNTEAARDAILRIVGELEQMVSEDVPLDHRVHARIIGARGKAIRKIMDEFKVDIRFPQSGAPDPNCVTVTGLPENVEEAIDHILNLEEEYLADVVDSEALQVYMKPPAHEEAKAPSRGFVVRDAPWTASSSEKAPDMSSSEEFPSFGAQVAPKTLPWGPKR.

Ser-2 carries the N-acetylserine modification. Thr-8 is subject to Phosphothreonine. Residues Ser-11, Ser-31, and Ser-35 each carry the phosphoserine modification. KH domains are found at residues 158 to 229, 230 to 302, 303 to 371, 372 to 442, 443 to 514, 515 to 588, 589 to 660, 661 to 734, 735 to 807, 808 to 880, 881 to 979, 980 to 1059, 1060 to 1134, and 1135 to 1209; these read PKEH…RLEV, EKAF…AVEV, KKSQ…SVAA, PSWL…EINI, DHKF…DLII, EQRF…SVPI, FKQF…EVSI, PAKL…DIRA, KPEY…SMLV, DPKH…ECAI, PQKF…EVEV, PFDL…SVTV, DPKY…DVPL, and DHRV…ALQV. Residues Thr-295 and Thr-296 each carry the phosphothreonine modification. Ser-317 carries the phosphoserine modification. The residue at position 437 (Tyr-437) is a Phosphotyrosine. Ser-645 is modified (phosphoserine). Residues 914–944 are disordered; it reads ENAVHSTEPVVQENGDEAGEGREAKDCDPGS. A compositionally biased stretch (basic and acidic residues) spans 932 to 944; the sequence is GEGREAKDCDPGS. Position 991 is an N6-acetyllysine (Lys-991). The interval 1233 to 1268 is disordered; that stretch reads WTASSSEKAPDMSSSEEFPSFGAQVAPKTLPWGPKR. The segment covering 1234-1249 has biased composition (polar residues); sequence TASSSEKAPDMSSSEE. Ser-1247 and Ser-1252 each carry phosphoserine.

It localises to the cytoplasm. The protein resides in the nucleus. In terms of biological role, appears to play a role in cell sterol metabolism. It may function to protect cells from over-accumulation of cholesterol. The polypeptide is Vigilin (HDLBP) (Homo sapiens (Human)).